Reading from the N-terminus, the 107-residue chain is Guanylate cyclase activator 2B (107 aa).

The first 21 residues, 1 to 21 (MSGSQLWAAVVVLLLLQSAQG), serve as a signal peptide directing secretion. Positions 22 to 92 (VYIKYHGFQV…STFKALRTIA (71 aa)) are excised as a propeptide. 3 cysteine pairs are disulfide-bonded: cysteine 63–cysteine 76, cysteine 96–cysteine 104, and cysteine 99–cysteine 107.

This sequence belongs to the guanylin family.

It is found in the secreted. In terms of biological role, endogenous activator of intestinal guanylate cyclase. It stimulates this enzyme through the same receptor binding region as the heat-stable enterotoxins. May be a potent physiological regulator of intestinal fluid and electrolyte transport. May be an autocrine/paracrine regulator of intestinal salt and water transport. This is Guanylate cyclase activator 2B (GUCA2B) from Notomys alexis (Spinifex hopping mouse).